Reading from the N-terminus, the 98-residue chain is NADH-ubiquinone oxidoreductase chain 4L (98 aa).

3 consecutive transmembrane segments (helical) span residues 1 to 21 (MSMV…GLLI), 30 to 50 (LLCL…TILT), and 61 to 81 (IILL…LVMI).

It belongs to the complex I subunit 4L family. As to quaternary structure, core subunit of respiratory chain NADH dehydrogenase (Complex I) which is composed of 45 different subunits.

The protein resides in the mitochondrion inner membrane. The catalysed reaction is a ubiquinone + NADH + 5 H(+)(in) = a ubiquinol + NAD(+) + 4 H(+)(out). Its function is as follows. Core subunit of the mitochondrial membrane respiratory chain NADH dehydrogenase (Complex I) which catalyzes electron transfer from NADH through the respiratory chain, using ubiquinone as an electron acceptor. Part of the enzyme membrane arm which is embedded in the lipid bilayer and involved in proton translocation. The sequence is that of NADH-ubiquinone oxidoreductase chain 4L (MT-ND4L) from Gulo gulo (Wolverine).